The primary structure comprises 248 residues: Histone H1, gonadal (248 aa).

Disordered regions lie at residues 1 to 46 (PGSP…PPVL) and 115 to 248 (AVAK…KARK). A compositionally biased stretch (basic residues) spans 9–39 (ASPRKSPRKSPKKSPRKASASPRRKAKRARA). The H15 domain occupies 41–115 (THPPVLEMVQ…GASGRFRVGA (75 aa)). Residues 118 to 248 (KPKKAKKTSA…KRRSPKKARK (131 aa)) are compositionally biased toward basic residues.

It belongs to the histone H1/H5 family. Sperm.

The protein localises to the nucleus. The protein resides in the chromosome. Its function is as follows. Histones H1 are necessary for the condensation of nucleosome chains into higher-order structures. This is Histone H1, gonadal from Parechinus angulosus (Angulate sea urchin).